Consider the following 191-residue polypeptide: MEDQKQTPSNQTATPAGDEATSTAAASPETGAPDTAAAAVDDVAAQLAALEAKASEHYDLYMRAVAEGENIRRRAQEDVAKAHKFAIENFADNLLPVMDSLQAALADGSGDIAKLREGVELTARQLAAAFERGKIVELNPVGEKFDPHRHQAISMVPADQEPNTVVTVLQRGYTIADRVLRPALVTVAAPK.

Over residues 1–14 (MEDQKQTPSNQTAT) the composition is skewed to polar residues. The disordered stretch occupies residues 1-35 (MEDQKQTPSNQTATPAGDEATSTAAASPETGAPDT). Over residues 19 to 35 (EATSTAAASPETGAPDT) the composition is skewed to low complexity.

The protein belongs to the GrpE family. Homodimer.

The protein resides in the cytoplasm. Its function is as follows. Participates actively in the response to hyperosmotic and heat shock by preventing the aggregation of stress-denatured proteins, in association with DnaK and GrpE. It is the nucleotide exchange factor for DnaK and may function as a thermosensor. Unfolded proteins bind initially to DnaJ; upon interaction with the DnaJ-bound protein, DnaK hydrolyzes its bound ATP, resulting in the formation of a stable complex. GrpE releases ADP from DnaK; ATP binding to DnaK triggers the release of the substrate protein, thus completing the reaction cycle. Several rounds of ATP-dependent interactions between DnaJ, DnaK and GrpE are required for fully efficient folding. The protein is Protein GrpE of Cupriavidus taiwanensis (strain DSM 17343 / BCRC 17206 / CCUG 44338 / CIP 107171 / LMG 19424 / R1) (Ralstonia taiwanensis (strain LMG 19424)).